The following is a 310-amino-acid chain: Putative S-adenosyl-L-methionine-dependent methyltransferase MMAR_3534 (310 aa).

Residues Asp131 and 160 to 161 (DL) contribute to the S-adenosyl-L-methionine site.

It belongs to the UPF0677 family.

Exhibits S-adenosyl-L-methionine-dependent methyltransferase activity. This is Putative S-adenosyl-L-methionine-dependent methyltransferase MMAR_3534 from Mycobacterium marinum (strain ATCC BAA-535 / M).